We begin with the raw amino-acid sequence, 388 residues long: Lipid-A-disaccharide synthase (388 aa).

It belongs to the LpxB family.

It catalyses the reaction a lipid X + a UDP-2-N,3-O-bis[(3R)-3-hydroxyacyl]-alpha-D-glucosamine = a lipid A disaccharide + UDP + H(+). It participates in bacterial outer membrane biogenesis; LPS lipid A biosynthesis. Its function is as follows. Condensation of UDP-2,3-diacylglucosamine and 2,3-diacylglucosamine-1-phosphate to form lipid A disaccharide, a precursor of lipid A, a phosphorylated glycolipid that anchors the lipopolysaccharide to the outer membrane of the cell. The protein is Lipid-A-disaccharide synthase of Burkholderia pseudomallei (strain K96243).